Reading from the N-terminus, the 197-residue chain is Translation machinery-associated protein 22 (197 aa).

Positions 102-173 (VQIKRVERNK…DVKEWLLEVY (72 aa)) constitute an SUI1 domain.

Belongs to the DENR family. As to quaternary structure, interacts with the 40S ribosomal subunit.

It localises to the cytoplasm. This Aspergillus niger (strain ATCC MYA-4892 / CBS 513.88 / FGSC A1513) protein is Translation machinery-associated protein 22 (tma22).